The chain runs to 185 residues: Protein GrpE (185 aa).

This sequence belongs to the GrpE family. As to quaternary structure, homodimer.

It localises to the cytoplasm. Its function is as follows. Participates actively in the response to hyperosmotic and heat shock by preventing the aggregation of stress-denatured proteins, in association with DnaK and GrpE. It is the nucleotide exchange factor for DnaK and may function as a thermosensor. Unfolded proteins bind initially to DnaJ; upon interaction with the DnaJ-bound protein, DnaK hydrolyzes its bound ATP, resulting in the formation of a stable complex. GrpE releases ADP from DnaK; ATP binding to DnaK triggers the release of the substrate protein, thus completing the reaction cycle. Several rounds of ATP-dependent interactions between DnaJ, DnaK and GrpE are required for fully efficient folding. This chain is Protein GrpE, found in Methanobrevibacter smithii (strain ATCC 35061 / DSM 861 / OCM 144 / PS).